Consider the following 1222-residue polypeptide: ATP-dependent helicase/nuclease subunit A (1222 aa).

One can recognise a UvrD-like helicase ATP-binding domain in the interval 39-495 (QKRTAQQIEA…ILLKENFRSQ (457 aa)). Residue 60-67 (ASAGSGKT) coordinates ATP. The UvrD-like helicase C-terminal domain occupies 524-810 (QLIAGSHAQT…NLMTIHKSKG (287 aa)).

It belongs to the helicase family. AddA subfamily. In terms of assembly, heterodimer of AddA and AddB/RexB. Mg(2+) is required as a cofactor.

The catalysed reaction is Couples ATP hydrolysis with the unwinding of duplex DNA by translocating in the 3'-5' direction.. It carries out the reaction ATP + H2O = ADP + phosphate + H(+). In terms of biological role, the heterodimer acts as both an ATP-dependent DNA helicase and an ATP-dependent, dual-direction single-stranded exonuclease. Recognizes the chi site generating a DNA molecule suitable for the initiation of homologous recombination. The AddA nuclease domain is required for chi fragment generation; this subunit has the helicase and 3' -&gt; 5' nuclease activities. The chain is ATP-dependent helicase/nuclease subunit A from Streptococcus pyogenes serotype M12 (strain MGAS9429).